The following is a 182-amino-acid chain: Large ribosomal subunit protein uL5 (182 aa).

This sequence belongs to the universal ribosomal protein uL5 family. Part of the 50S ribosomal subunit; part of the 5S rRNA/L5/L18/L25 subcomplex. Contacts the 5S rRNA and the P site tRNA. Forms a bridge to the 30S subunit in the 70S ribosome.

Its function is as follows. This is one of the proteins that bind and probably mediate the attachment of the 5S RNA into the large ribosomal subunit, where it forms part of the central protuberance. In the 70S ribosome it contacts protein S13 of the 30S subunit (bridge B1b), connecting the 2 subunits; this bridge is implicated in subunit movement. Contacts the P site tRNA; the 5S rRNA and some of its associated proteins might help stabilize positioning of ribosome-bound tRNAs. The protein is Large ribosomal subunit protein uL5 of Borrelia garinii subsp. bavariensis (strain ATCC BAA-2496 / DSM 23469 / PBi) (Borreliella bavariensis).